The sequence spans 25 residues: Cysteine-rich venom protein 25 (25 aa).

The segment at 1–25 (NVDFNSESTRRKKKQKEIVDLXNSL) is disordered.

The protein belongs to the CRISP family. Post-translationally, contains 8 disulfide bonds. Expressed by the venom gland.

The protein resides in the secreted. The chain is Cysteine-rich venom protein 25 from Naja haje haje (Egyptian cobra).